Here is a 156-residue protein sequence, read N- to C-terminus: Urease accessory protein UreE (156 aa).

A disordered region spans residues 133–156; it reads RPESGAYGSGRTMGHDHGPFHVHA. A compositionally biased stretch (basic and acidic residues) spans 145–156; sequence MGHDHGPFHVHA.

The protein belongs to the UreE family.

The protein resides in the cytoplasm. Its function is as follows. Involved in urease metallocenter assembly. Binds nickel. Probably functions as a nickel donor during metallocenter assembly. The polypeptide is Urease accessory protein UreE (Rhodobacter capsulatus (Rhodopseudomonas capsulata)).